Here is a 227-residue protein sequence, read N- to C-terminus: PKHD-type hydroxylase PHZ_c0292 (227 aa).

Residues 78–178 (VVFPPLFNRY…RVCSFFWIQS (101 aa)) form the Fe2OG dioxygenase domain. Positions 96, 98, and 159 each coordinate Fe cation. A 2-oxoglutarate-binding site is contributed by arginine 169.

Fe(2+) serves as cofactor. L-ascorbate is required as a cofactor.

The polypeptide is PKHD-type hydroxylase PHZ_c0292 (Phenylobacterium zucineum (strain HLK1)).